Here is a 393-residue protein sequence, read N- to C-terminus: Homoserine O-succinyltransferase (393 aa).

In terms of domain architecture, AB hydrolase-1 spans 62-372; the sequence is NAVLVCHALN…PHGHDAFLLD (311 aa). The active-site Nucleophile is the serine 168. Arginine 238 is a binding site for substrate. Catalysis depends on residues aspartate 333 and histidine 366. Aspartate 367 lines the substrate pocket.

It belongs to the AB hydrolase superfamily. MetX family. As to quaternary structure, homodimer.

The protein localises to the cytoplasm. The enzyme catalyses L-homoserine + succinyl-CoA = O-succinyl-L-homoserine + CoA. Its pathway is amino-acid biosynthesis; L-methionine biosynthesis via de novo pathway; O-succinyl-L-homoserine from L-homoserine: step 1/1. Transfers a succinyl group from succinyl-CoA to L-homoserine, forming succinyl-L-homoserine. This chain is Homoserine O-succinyltransferase, found in Cupriavidus taiwanensis (strain DSM 17343 / BCRC 17206 / CCUG 44338 / CIP 107171 / LMG 19424 / R1) (Ralstonia taiwanensis (strain LMG 19424)).